We begin with the raw amino-acid sequence, 416 residues long: Serine hydroxymethyltransferase (416 aa).

(6S)-5,6,7,8-tetrahydrofolate contacts are provided by residues Leu118 and 122–124 (GHL). N6-(pyridoxal phosphate)lysine is present on Lys226. Position 350 to 352 (350 to 352 (SPF)) interacts with (6S)-5,6,7,8-tetrahydrofolate.

It belongs to the SHMT family. As to quaternary structure, homodimer. The cofactor is pyridoxal 5'-phosphate.

It localises to the cytoplasm. The enzyme catalyses (6R)-5,10-methylene-5,6,7,8-tetrahydrofolate + glycine + H2O = (6S)-5,6,7,8-tetrahydrofolate + L-serine. It participates in one-carbon metabolism; tetrahydrofolate interconversion. The protein operates within amino-acid biosynthesis; glycine biosynthesis; glycine from L-serine: step 1/1. Catalyzes the reversible interconversion of serine and glycine with tetrahydrofolate (THF) serving as the one-carbon carrier. This reaction serves as the major source of one-carbon groups required for the biosynthesis of purines, thymidylate, methionine, and other important biomolecules. Also exhibits THF-independent aldolase activity toward beta-hydroxyamino acids, producing glycine and aldehydes, via a retro-aldol mechanism. The sequence is that of Serine hydroxymethyltransferase from Sulfurovum sp. (strain NBC37-1).